Reading from the N-terminus, the 205-residue chain is Guanylate kinase (205 aa).

In terms of domain architecture, Guanylate kinase-like spans glycine 7–asparagine 185. Alanine 14–threonine 21 contacts ATP.

Belongs to the guanylate kinase family.

It is found in the cytoplasm. The enzyme catalyses GMP + ATP = GDP + ADP. Functionally, essential for recycling GMP and indirectly, cGMP. The sequence is that of Guanylate kinase from Neisseria gonorrhoeae (strain ATCC 700825 / FA 1090).